The primary structure comprises 169 residues: Peptide methionine sulfoxide reductase MsrA (169 aa).

Cys-10 is an active-site residue.

This sequence belongs to the MsrA Met sulfoxide reductase family.

It catalyses the reaction L-methionyl-[protein] + [thioredoxin]-disulfide + H2O = L-methionyl-(S)-S-oxide-[protein] + [thioredoxin]-dithiol. The enzyme catalyses [thioredoxin]-disulfide + L-methionine + H2O = L-methionine (S)-S-oxide + [thioredoxin]-dithiol. Functionally, has an important function as a repair enzyme for proteins that have been inactivated by oxidation. Catalyzes the reversible oxidation-reduction of methionine sulfoxide in proteins to methionine. The protein is Peptide methionine sulfoxide reductase MsrA of Streptococcus equi subsp. zooepidemicus (strain MGCS10565).